Here is a 387-residue protein sequence, read N- to C-terminus: GTP-binding protein 10 (387 aa).

In terms of domain architecture, Obg spans 13–148 (GNFIDKLRLF…RIIHLDLKLI (136 aa)). The region spanning 149-344 (ADVGLVGFPN…LKNCIRKSLD (196 aa)) is the OBG-type G domain. GTP-binding positions include 155-162 (GFPNAGKS), 202-206 (DLPGL), and 278-281 (NKMD).

It belongs to the TRAFAC class OBG-HflX-like GTPase superfamily. OBG GTPase family.

The protein resides in the nucleus. Its subcellular location is the nucleolus. It localises to the chromosome. In terms of biological role, may be involved in the ribosome maturation process. Complements an ObgE(CgtA) function in E.coli ribosome maturation. Plays a role of GTPase in vitro. When missing, disorganization of the nucleolar architecture is observed. This Homo sapiens (Human) protein is GTP-binding protein 10 (GTPBP10).